Reading from the N-terminus, the 160-residue chain is Large ribosomal subunit protein eL21 (160 aa).

Basic and acidic residues-rich tracts occupy residues 112-123 and 136-145; these read NDQKKKEAKEKG and REAHFVRTNG. A disordered region spans residues 112–145; it reads NDQKKKEAKEKGTWVQLKRQPAPPREAHFVRTNG.

Belongs to the eukaryotic ribosomal protein eL21 family. In terms of assembly, component of the large ribosomal subunit.

It localises to the cytoplasm. It is found in the cytosol. Its subcellular location is the endoplasmic reticulum. Component of the large ribosomal subunit. The ribosome is a large ribonucleoprotein complex responsible for the synthesis of proteins in the cell. The chain is Large ribosomal subunit protein eL21 (RPL21) from Capra hircus (Goat).